We begin with the raw amino-acid sequence, 68 residues long: Small ribosomal subunit protein bS21 (68 aa).

It belongs to the bacterial ribosomal protein bS21 family.

This is Small ribosomal subunit protein bS21 from Endomicrobium trichonymphae.